A 359-amino-acid polypeptide reads, in one-letter code: Peptide chain release factor 1 (359 aa).

Position 235 is an N5-methylglutamine (Gln235). Positions 280 to 306 (AERQRADSERSADRKSQVGSGDRSERI) are disordered.

This sequence belongs to the prokaryotic/mitochondrial release factor family. Methylated by PrmC. Methylation increases the termination efficiency of RF1.

Its subcellular location is the cytoplasm. In terms of biological role, peptide chain release factor 1 directs the termination of translation in response to the peptide chain termination codons UAG and UAA. This is Peptide chain release factor 1 from Rhizobium leguminosarum bv. trifolii (strain WSM2304).